A 232-amino-acid chain; its full sequence is Putative N-acetylmannosamine-6-phosphate 2-epimerase (232 aa).

This sequence belongs to the NanE family.

The enzyme catalyses an N-acyl-D-glucosamine 6-phosphate = an N-acyl-D-mannosamine 6-phosphate. The protein operates within amino-sugar metabolism; N-acetylneuraminate degradation; D-fructose 6-phosphate from N-acetylneuraminate: step 3/5. In terms of biological role, converts N-acetylmannosamine-6-phosphate (ManNAc-6-P) to N-acetylglucosamine-6-phosphate (GlcNAc-6-P). This chain is Putative N-acetylmannosamine-6-phosphate 2-epimerase, found in Corynebacterium glutamicum (strain R).